The following is a 634-amino-acid chain: Probable potassium transport system protein Kup (634 aa).

The next 12 membrane-spanning stretches (helical) occupy residues 21-41 (LVIGAIGVVFGDIGTSPLYTL), 58-78 (VLGILSLVFWALMLVVTLKYV), 110-130 (MYVVGILGIFGASLFFGDGVI), 147-167 (APKLEPFVVPITLVVLSMLFL), 179-199 (AFGPITLLWFFALGAIGVYNM), 223-243 (WHAVFVLGAVVLAVTGGEALY), 258-278 (WQFVVLPMLTLTYLGQGALVL), 296-316 (ALYPMIVLATAATVIASQALI), 348-368 (IYVPAVNWCLLALVAVAVIGF), 377-397 (AYGVSVTGTMLITTVLMIIYA), 403-423 (VPAPLLWLFALVFLAVDCAFF), and 427-447 (IIKFLDGAWFPLLLGLILFTL).

Belongs to the HAK/KUP transporter (TC 2.A.72) family.

Its subcellular location is the cell inner membrane. It carries out the reaction K(+)(in) + H(+)(in) = K(+)(out) + H(+)(out). Its function is as follows. Transport of potassium into the cell. Likely operates as a K(+):H(+) symporter. This Xanthomonas axonopodis pv. citri (strain 306) protein is Probable potassium transport system protein Kup.